Here is a 761-residue protein sequence, read N- to C-terminus: Probable ubiquitin carboxyl-terminal hydrolase creB (761 aa).

A disordered region spans residues 1–45 (MGSFLRSFRHNGGSTAPSVGAVPAKKEPQPPPMTPLEKRLLDMGP). Basic and acidic residues predominate over residues 36-45 (LEKRLLDMGP). Residues 55–468 (YGMENYGNTC…CAYVLFYQET (414 aa)) enclose the USP domain. Catalysis depends on cysteine 64, which acts as the Nucleophile. Disordered stretches follow at residues 113 to 146 (EAEA…DSPE) and 242 to 269 (PLME…KTPN). Residues 256 to 269 (SVDQSSSTGSKTPN) are compositionally biased toward polar residues. Catalysis depends on histidine 419, which acts as the Proton acceptor. The segment at 496-761 (LKQNGFPQSP…LRKKSFSILS (266 aa)) is disordered. A compositionally biased stretch (pro residues) spans 555–566 (PLSPVPPVPPIP). Residues 577–640 (KNDALAKREE…ASKAEEDRRL (64 aa)) are a coiled coil. Residues 580–649 (ALAKREEKER…LSTENGKEKQ (70 aa)) show a composition bias toward basic and acidic residues. Residues 655-666 (RLKRGSKSLSHR) show a composition bias toward basic residues. Residues 692 to 710 (SQSGPTSEQQQQQRQQSPP) are compositionally biased toward low complexity. Residues 712 to 722 (HDQPPNSPQPG) show a composition bias toward pro residues. Residues 725 to 743 (TIREDEQVNHKDSKHERTG) are compositionally biased toward basic and acidic residues. The segment covering 744-761 (HGKWRSFSLRKKSFSILS) has biased composition (basic residues).

The protein belongs to the peptidase C19 family. As to quaternary structure, interacts with creA, creC and qutD.

The catalysed reaction is Thiol-dependent hydrolysis of ester, thioester, amide, peptide and isopeptide bonds formed by the C-terminal Gly of ubiquitin (a 76-residue protein attached to proteins as an intracellular targeting signal).. Its function is as follows. Ubiquitin thioesterase component of the regulatory network controlling carbon source utilization through ubiquitination and deubiquitination involving creA, creB, creC, creD and acrB. Deubiquitinates the creA catabolic repressor and the quinate permease qutD. Also plays a role in response to carbon starvation and the control of extracellular proteases activity. In Neosartorya fischeri (strain ATCC 1020 / DSM 3700 / CBS 544.65 / FGSC A1164 / JCM 1740 / NRRL 181 / WB 181) (Aspergillus fischerianus), this protein is Probable ubiquitin carboxyl-terminal hydrolase creB (creB).